The sequence spans 354 residues: Uroporphyrinogen decarboxylase (354 aa).

Residues 27–31 (RQAGR), Asp-77, Tyr-153, Thr-208, and His-326 contribute to the substrate site.

Belongs to the uroporphyrinogen decarboxylase family. In terms of assembly, homodimer.

Its subcellular location is the cytoplasm. The catalysed reaction is uroporphyrinogen III + 4 H(+) = coproporphyrinogen III + 4 CO2. It functions in the pathway porphyrin-containing compound metabolism; protoporphyrin-IX biosynthesis; coproporphyrinogen-III from 5-aminolevulinate: step 4/4. In terms of biological role, catalyzes the decarboxylation of four acetate groups of uroporphyrinogen-III to yield coproporphyrinogen-III. In Neisseria gonorrhoeae (strain NCCP11945), this protein is Uroporphyrinogen decarboxylase.